Here is a 210-residue protein sequence, read N- to C-terminus: tRNA (guanine-N(7)-)-methyltransferase (210 aa).

S-adenosyl-L-methionine-binding residues include Glu43, Glu68, Asp95, and Asp117. Asp117 is a catalytic residue. Substrate is bound by residues Lys121, Asp153, and 190 to 193 (TEYE).

This sequence belongs to the class I-like SAM-binding methyltransferase superfamily. TrmB family.

The enzyme catalyses guanosine(46) in tRNA + S-adenosyl-L-methionine = N(7)-methylguanosine(46) in tRNA + S-adenosyl-L-homocysteine. Its pathway is tRNA modification; N(7)-methylguanine-tRNA biosynthesis. In terms of biological role, catalyzes the formation of N(7)-methylguanine at position 46 (m7G46) in tRNA. The protein is tRNA (guanine-N(7)-)-methyltransferase of Macrococcus caseolyticus (strain JCSC5402) (Macrococcoides caseolyticum).